A 103-amino-acid chain; its full sequence is Small ribosomal subunit protein uS10 (103 aa).

It belongs to the universal ribosomal protein uS10 family. As to quaternary structure, part of the 30S ribosomal subunit.

Involved in the binding of tRNA to the ribosomes. In Pseudomonas savastanoi pv. phaseolicola (strain 1448A / Race 6) (Pseudomonas syringae pv. phaseolicola (strain 1448A / Race 6)), this protein is Small ribosomal subunit protein uS10.